The following is a 183-amino-acid chain: ATP synthase subunit delta (183 aa).

This sequence belongs to the ATPase delta chain family. F-type ATPases have 2 components, F(1) - the catalytic core - and F(0) - the membrane proton channel. F(1) has five subunits: alpha(3), beta(3), gamma(1), delta(1), epsilon(1). F(0) has three main subunits: a(1), b(2) and c(10-14). The alpha and beta chains form an alternating ring which encloses part of the gamma chain. F(1) is attached to F(0) by a central stalk formed by the gamma and epsilon chains, while a peripheral stalk is formed by the delta and b chains.

Its subcellular location is the cell inner membrane. In terms of biological role, f(1)F(0) ATP synthase produces ATP from ADP in the presence of a proton or sodium gradient. F-type ATPases consist of two structural domains, F(1) containing the extramembraneous catalytic core and F(0) containing the membrane proton channel, linked together by a central stalk and a peripheral stalk. During catalysis, ATP synthesis in the catalytic domain of F(1) is coupled via a rotary mechanism of the central stalk subunits to proton translocation. Functionally, this protein is part of the stalk that links CF(0) to CF(1). It either transmits conformational changes from CF(0) to CF(1) or is implicated in proton conduction. This is ATP synthase subunit delta from Verminephrobacter eiseniae (strain EF01-2).